Here is a 136-residue protein sequence, read N- to C-terminus: MGARKRISAEARKEAQKTMYFAKLNNVPTSPRKMRLVADMIRGMEVFRALGVLKFSNKEAAARVEKLLRSAIANWEQKNERKAEAGELCVSSISVDCATTLKRMRPAPQGRGYRIRKRSNHVTLFVDTLSKNDSQN.

Belongs to the universal ribosomal protein uL22 family. Part of the 50S ribosomal subunit.

This protein binds specifically to 23S rRNA; its binding is stimulated by other ribosomal proteins, e.g. L4, L17, and L20. It is important during the early stages of 50S assembly. It makes multiple contacts with different domains of the 23S rRNA in the assembled 50S subunit and ribosome. Its function is as follows. The globular domain of the protein is located near the polypeptide exit tunnel on the outside of the subunit, while an extended beta-hairpin is found that lines the wall of the exit tunnel in the center of the 70S ribosome. This is Large ribosomal subunit protein uL22 from Parabacteroides distasonis (strain ATCC 8503 / DSM 20701 / CIP 104284 / JCM 5825 / NCTC 11152).